Reading from the N-terminus, the 173-residue chain is C-phycocyanin beta subunit (173 aa).

Asn-73 carries the post-translational modification N4-methylasparagine. (2R,3E)-phycocyanobilin contacts are provided by Cys-83 and Cys-154.

The protein belongs to the phycobiliprotein family. Heterodimer of an alpha and a beta subunit, which further assembles into trimers and the trimers into hexamers. Contains two covalently linked bilin chromophores.

It localises to the cellular thylakoid membrane. Light-harvesting photosynthetic bile pigment-protein from the phycobiliprotein complex (phycobilisome, PBS). Phycocyanin is the major phycobiliprotein in the PBS rod. The chain is C-phycocyanin beta subunit (cpcB1) from Synechococcus elongatus (strain ATCC 33912 / PCC 7942 / FACHB-805) (Anacystis nidulans R2).